The following is a 748-amino-acid chain: Tyrosine--tRNA ligase 2, cytoplasmic (748 aa).

Position 1 is an N-acetylmethionine (methionine 1). Positions 441-449 (PSGRMHIAQ) match the 'HIGH' region motif. Tyrosine 564, glutamine 568, aspartate 571, and glutamine 586 together coordinate L-tyrosine. Residues 623-627 (KMSKS) carry the 'KMSKS' region motif. Lysine 626 contributes to the ATP binding site.

It belongs to the class-I aminoacyl-tRNA synthetase family.

Its subcellular location is the cytoplasm. The protein localises to the cytosol. The enzyme catalyses tRNA(Tyr) + L-tyrosine + ATP = L-tyrosyl-tRNA(Tyr) + AMP + diphosphate + H(+). In terms of biological role, catalyzes the attachment of tyrosine to tRNA(Tyr) in a two-step reaction: tyrosine is first activated by ATP to form Tyr-AMP and then transferred to the acceptor end of tRNA(Tyr). This chain is Tyrosine--tRNA ligase 2, cytoplasmic, found in Arabidopsis thaliana (Mouse-ear cress).